Consider the following 182-residue polypeptide: Histone deacetylase complex subunit SAP30L (182 aa).

At M1 the chain carries N-acetylmethionine. A compositionally biased stretch (acidic residues) spans 1 to 10 (MNGFSTEEDS). The interval 1–22 (MNGFSTEEDSREGPPAAPAAAP) is disordered. 2 cysteine pairs are disulfide-bonded: C28/C29 and C37/C73. The Atypical zinc-finger motif lies at 28-76 (CCLIADGERCVRPAGNASFSKRVQKSISQKKLKLDIDKSVRHLYICDFH). K48 participates in a covalent cross-link: Glycyl lysine isopeptide (Lys-Gly) (interchain with G-Cter in SUMO2). The segment at 84–103 (RNKRKRKASDDGGDSPEHDA) is disordered. A Nuclear localization signal (NLS) motif is present at residues 85–90 (NKRKRK). The important for DNA and phosphoinositide binding stretch occupies residues 87 to 89 (RKR). A phosphoserine mark is found at S92 and S98. Residues K154, K165, and K174 each participate in a glycyl lysine isopeptide (Lys-Gly) (interchain with G-Cter in SUMO2) cross-link.

The protein belongs to the SAP30 family. Interacts with components of the histone deacetylase complex SIN3A, HDAC1 and HDAC2. Binds histones and nucleosomes. Interacts with FEZ1.

Its subcellular location is the nucleus. The protein resides in the nucleolus. In terms of biological role, functions as a transcription repressor, probably via its interaction with histone deacetylase complexes. Involved in the functional recruitment of the class 1 Sin3-histone deacetylase complex (HDAC) to the nucleolus. Binds DNA, apparently without sequence-specificity, and bends bound double-stranded DNA. Binds phosphoinositol phosphates (phosphoinositol 3-phosphate, phosphoinositol 4-phosphate and phosphoinositol 5-phosphate) via the same basic sequence motif that mediates DNA binding and nuclear import. The protein is Histone deacetylase complex subunit SAP30L (Sap30l) of Mus musculus (Mouse).